The chain runs to 643 residues: Zinc finger protein 64 (643 aa).

11 consecutive C2H2-type zinc fingers follow at residues 173–195 (HKCEVCGKCFSRKDKLKTHMRCH), 201–223 (YKCKTCDYAAADSSSLNKHLRIH), 229–251 (FKCQICPYASRNSSQLTVHLRSH), 297–322 (FNCRYPGCHFKTVHGMKDLDRHLRIH), 328–350 (HKCEFCDKCFSRKDNLTMHMRCH), 356–378 (HKCHLCDYAAVDSSSLKKHLRIH), 384–406 (YKCQLCPYASRNSSQLTVHLRSH), 412–434 (FQCWLCSAKFKISSDLKRHMIVH), 440–463 (FKCEFCDVRCTMKANLKSHIRIKH), 465–487 (FKCLHCAFQGRDRADLLEHSRLH), and 493–515 (EKCPECSYSCSNPAALRVHSRVH). The Zn(2+) site is built by C495, C498, H511, H515, C523, C526, H539, and H544. The span at 538 to 552 (KHIDKVHREGAKTEN) shows a compositional bias: basic and acidic residues. The segment at 538-571 (KHIDKVHREGAKTENRAPPGKDGPGESGPHHVPN) is disordered. The C2H2-type 12 zinc finger occupies 578–600 (FGCDKCGASFVRDDSLRCHRKQH).

The protein belongs to the krueppel C2H2-type zinc-finger protein family. In terms of assembly, interacts with NOTCH1. Widely expressed. Expressed in the brain, spleen, liver, and heart.

It is found in the nucleus. In terms of biological role, may be involved in the regulation of mesenchymal cell differentiation through transactivation of NOTCH1 target genes. The sequence is that of Zinc finger protein 64 from Mus musculus (Mouse).